Here is a 180-residue protein sequence, read N- to C-terminus: Calcium-binding protein E (180 aa).

EF-hand domains lie at 3 to 38 (KVEA…NSNI), 40 to 76 (DPLA…KKIK), 85 to 120 (ALRS…DPDF), and 139 to 174 (RAKS…HPEF). Ca(2+)-binding residues include Asp16, Asp18, Asp20, Asn22, and Glu27. The Ca(2+) site is built by Asp98, Asp100, Asp102, Glu109, Asp152, Asp154, Asn156, Lys158, and Glu163.

In Dictyostelium discoideum (Social amoeba), this protein is Calcium-binding protein E (cbpE).